A 370-amino-acid polypeptide reads, in one-letter code: uncharacterized protein (370 aa).

Residues aspartate 152, histidine 154, aspartate 184, asparagine 215, histidine 306, and histidine 308 each coordinate a divalent metal cation.

Belongs to the metallophosphoesterase superfamily. A divalent metal cation serves as cofactor.

This is an uncharacterized protein from Helicobacter pylori (strain J99 / ATCC 700824) (Campylobacter pylori J99).